A 272-amino-acid chain; its full sequence is HMP-PP phosphatase (272 aa).

The Nucleophile role is filled by D8. Residues D8, D10, and D212 each contribute to the Mg(2+) site.

It belongs to the HAD-like hydrolase superfamily. Cof family. Mg(2+) serves as cofactor.

The enzyme catalyses 4-amino-2-methyl-5-(diphosphooxymethyl)pyrimidine + H2O = 4-amino-2-methyl-5-(phosphooxymethyl)pyrimidine + phosphate + H(+). Its function is as follows. Catalyzes the hydrolysis of 4-amino-2-methyl-5-hydroxymethylpyrimidine pyrophosphate (HMP-PP) to 4-amino-2-methyl-5-hydroxymethylpyrimidine phosphate (HMP-P). This is HMP-PP phosphatase from Cronobacter sakazakii (strain ATCC BAA-894) (Enterobacter sakazakii).